The sequence spans 160 residues: MSSKISSSRCCTLFCHVNTRIALTILDILIGFSNILSYAIQFHNWSALTLTAMVTLVACHTLQMFLAEKKNTITHWKYSTFKWIMWIDITLGFLALGCFVVCFIIAGVTEIEFTNLYGENLWFTGLWATAITKYTWQNALLARNYSNQKRILKSEIVEDA.

A helical membrane pass occupies residues 21 to 41 (IALTILDILIGFSNILSYAIQ). The N-linked (GlcNAc...) asparagine glycan is linked to asparagine 44. A run of 3 helical transmembrane segments spans residues 47–67 (ALTL…MFLA), 89–109 (ITLG…AGVT), and 123–142 (FTGL…ALLA). An N-linked (GlcNAc...) asparagine glycan is attached at asparagine 144.

The protein belongs to the HRG family.

It localises to the membrane. In terms of biological role, heme transporter. The protein is Heme transporter hrg-5 (hrg-5) of Caenorhabditis elegans.